Reading from the N-terminus, the 80-residue chain is Acyl carrier protein (80 aa).

Residues 1-79 (MTEEEIFNKI…EAVEYIKSHQ (79 aa)) enclose the Carrier domain. At S39 the chain carries O-(pantetheine 4'-phosphoryl)serine.

The protein belongs to the acyl carrier protein (ACP) family. In terms of processing, 4'-phosphopantetheine is transferred from CoA to a specific serine of apo-ACP by AcpS. This modification is essential for activity because fatty acids are bound in thioester linkage to the sulfhydryl of the prosthetic group.

The protein localises to the cytoplasm. Its pathway is lipid metabolism; fatty acid biosynthesis. Functionally, carrier of the growing fatty acid chain in fatty acid biosynthesis. The polypeptide is Acyl carrier protein (Lactobacillus johnsonii (strain CNCM I-12250 / La1 / NCC 533)).